Here is a 66-residue protein sequence, read N- to C-terminus: Ocellatin-PT4 (66 aa).

The first 22 residues, 1 to 22 (MAFLKKSLFLVLFLGLVSLSIC), serve as a signal peptide directing secretion. Residues 23-39 (DEEKRQDEDDDDDDDEE) constitute a propeptide that is removed on maturation. Position 66 is a valine amide (Val-66).

Expressed by the skin glands.

Its subcellular location is the secreted. In terms of biological role, has antibacterial activity against Gram-negative bacteria E.coli ATCC 25922 (MIC=80 uM), K.pneumoniae ATCC 700603 (MIC=310 uM) and S.choleraesuis ATCC 14028 (MIC=310 uM). Shows no hemolytic activity and no cytotoxicity. This is Ocellatin-PT4 from Leptodactylus pustulatus (Ceara white-lipped frog).